The following is a 192-amino-acid chain: Type-4 uracil-DNA glycosylase (192 aa).

C18 and C21 together coordinate [4Fe-4S] cluster. Uracil is bound by residues 45 to 47 (GEG), F59, and N85. [4Fe-4S] cluster contacts are provided by C89 and C105. H161 serves as a coordination point for uracil.

Belongs to the uracil-DNA glycosylase (UDG) superfamily. Type 4 (UDGa) family.

It catalyses the reaction Hydrolyzes single-stranded DNA or mismatched double-stranded DNA and polynucleotides, releasing free uracil.. In terms of biological role, removes uracil bases that are present in DNA as a result of either deamination of cytosine or misincorporation of dUMP instead of dTMP. Can remove uracil from double-stranded DNA containing either a U/G or U/A base pair as well as from single-stranded DNA. The chain is Type-4 uracil-DNA glycosylase from Thermotoga maritima (strain ATCC 43589 / DSM 3109 / JCM 10099 / NBRC 100826 / MSB8).